A 164-amino-acid polypeptide reads, in one-letter code: Phosphopantetheine adenylyltransferase (164 aa).

Ser9 serves as a coordination point for substrate. ATP is bound by residues 9 to 10 and His17; that span reads SF. 3 residues coordinate substrate: Lys41, Val78, and Arg92. Residues 93 to 95, Glu103, and 128 to 134 contribute to the ATP site; these read GLR and SRPITAT.

It belongs to the bacterial CoaD family. Homohexamer. Mg(2+) is required as a cofactor.

The protein resides in the cytoplasm. The catalysed reaction is (R)-4'-phosphopantetheine + ATP + H(+) = 3'-dephospho-CoA + diphosphate. Its pathway is cofactor biosynthesis; coenzyme A biosynthesis; CoA from (R)-pantothenate: step 4/5. In terms of biological role, reversibly transfers an adenylyl group from ATP to 4'-phosphopantetheine, yielding dephospho-CoA (dPCoA) and pyrophosphate. This Rhizobium etli (strain ATCC 51251 / DSM 11541 / JCM 21823 / NBRC 15573 / CFN 42) protein is Phosphopantetheine adenylyltransferase.